Consider the following 534-residue polypeptide: CTP synthase (534 aa).

An amidoligase domain region spans residues 1–267 (MTKYIFVTGG…DQIVCDHLKL (267 aa)). Ser13 serves as a coordination point for CTP. Residue Ser13 participates in UTP binding. 14–19 (SIGKGI) contacts ATP. An L-glutamine-binding site is contributed by Tyr54. Asp71 contributes to the ATP binding site. Mg(2+) is bound by residues Asp71 and Glu141. CTP-binding positions include 148 to 150 (DIE), 188 to 193 (KTKPTQ), and Lys224. Residues 188 to 193 (KTKPTQ) and Lys224 contribute to the UTP site. Residues 292-534 (KIALVGKYVE…FVTAAVENAK (243 aa)) enclose the Glutamine amidotransferase type-1 domain. Residue Gly354 participates in L-glutamine binding. Cys381 serves as the catalytic Nucleophile; for glutamine hydrolysis. Residues 382–385 (LGMQ), Glu405, and Arg463 each bind L-glutamine. Active-site residues include His508 and Glu510.

The protein belongs to the CTP synthase family. Homotetramer.

The enzyme catalyses UTP + L-glutamine + ATP + H2O = CTP + L-glutamate + ADP + phosphate + 2 H(+). It catalyses the reaction L-glutamine + H2O = L-glutamate + NH4(+). The catalysed reaction is UTP + NH4(+) + ATP = CTP + ADP + phosphate + 2 H(+). The protein operates within pyrimidine metabolism; CTP biosynthesis via de novo pathway; CTP from UDP: step 2/2. With respect to regulation, allosterically activated by GTP, when glutamine is the substrate; GTP has no effect on the reaction when ammonia is the substrate. The allosteric effector GTP functions by stabilizing the protein conformation that binds the tetrahedral intermediate(s) formed during glutamine hydrolysis. Inhibited by the product CTP, via allosteric rather than competitive inhibition. In terms of biological role, catalyzes the ATP-dependent amination of UTP to CTP with either L-glutamine or ammonia as the source of nitrogen. Regulates intracellular CTP levels through interactions with the four ribonucleotide triphosphates. The polypeptide is CTP synthase (Streptococcus thermophilus (strain ATCC BAA-250 / LMG 18311)).